A 342-amino-acid chain; its full sequence is A-type ATP synthase subunit C (342 aa).

It belongs to the V-ATPase V0D/AC39 subunit family. As to quaternary structure, has multiple subunits with at least A(3), B(3), C, D, E, F, H, I and proteolipid K(x).

It localises to the cell membrane. Its function is as follows. Component of the A-type ATP synthase that produces ATP from ADP in the presence of a proton gradient across the membrane. In Archaeoglobus fulgidus (strain ATCC 49558 / DSM 4304 / JCM 9628 / NBRC 100126 / VC-16), this protein is A-type ATP synthase subunit C.